The chain runs to 204 residues: Dephospho-CoA kinase (204 aa).

Residues 12–204 enclose the DPCK domain; the sequence is RIGVTGGIAS…AWRDQISSIC (193 aa). 20–25 contributes to the ATP binding site; that stretch reads ASGKSS.

This sequence belongs to the CoaE family.

The protein localises to the cytoplasm. The catalysed reaction is 3'-dephospho-CoA + ATP = ADP + CoA + H(+). It participates in cofactor biosynthesis; coenzyme A biosynthesis; CoA from (R)-pantothenate: step 5/5. Functionally, catalyzes the phosphorylation of the 3'-hydroxyl group of dephosphocoenzyme A to form coenzyme A. In Prochlorococcus marinus (strain MIT 9313), this protein is Dephospho-CoA kinase.